Consider the following 542-residue polypeptide: DNA-binding protein modulo (542 aa).

The tract at residues 1 to 166 (MAQKKAVTVK…RGIPKVKVGK (166 aa)) is disordered. Residues Ser42 and Ser44 each carry the phosphoserine modification. Positions 59–114 (SEEDESDVEEQNDEQPGDDSDFETEEAAGLIDDEAEEDEEYNSDDEEDDDDDELEP) are enriched in acidic residues. Phosphoserine is present on residues Ser120, Ser129, and Ser142. Residues 123–135 (ADEVDESDDDEEA) are compositionally biased toward acidic residues. A compositionally biased stretch (basic and acidic residues) spans 136–158 (PVEKPVSKKSEKANSEKSEENRG). 4 consecutive RRM domains span residues 175–251 (QIVF…QPRN), 258–331 (RTVV…RISQ), 340–429 (LTLV…NLTS), and 420–489 (RAIL…PNSL). Ser304 is modified (phosphoserine). Ser330 carries the post-translational modification Phosphoserine; by PKA. Position 443 is a phosphoserine (Ser443). The interval 505–542 (RAPRKFQKDTKPNFGKKPFNKRPAQENGGKSFVKRARF) is disordered.

In terms of processing, the N-terminus is blocked.

Its subcellular location is the nucleus. In terms of biological role, its capacity to bind DNA and protein(s), and its differential expression during development suggest a role in the regulation of gene expression during Drosophila development. It could, in interaction with other factors, be required for the translation of instructions provided by pattern forming genes and controls, via chromatin changes, the activity of genes critical for the process of morphogenesis of several embryonic territories. The polypeptide is DNA-binding protein modulo (mod) (Drosophila melanogaster (Fruit fly)).